Here is a 442-residue protein sequence, read N- to C-terminus: O-acetyl-L-homoserine sulfhydrylase (442 aa).

The interval 1–32 (MVGPSGESMPRNFKPETIALHGGQEPDPTTTS) is disordered. Position 216 is an N6-(pyridoxal phosphate)lysine (Lys216).

This sequence belongs to the trans-sulfuration enzymes family. Pyridoxal 5'-phosphate is required as a cofactor.

The enzyme catalyses O-acetyl-L-homoserine + hydrogen sulfide = L-homocysteine + acetate. Its pathway is amino-acid biosynthesis; L-methionine biosynthesis via de novo pathway; L-homocysteine from O-acetyl-L-homoserine: step 1/1. With respect to regulation, feedback inhibited at very high concentrations of methionine or S-adenosylmethionine. Its function is as follows. Catalyzes the conversion of O-acetyl-L-homoserine (OAH) into homocysteine in the methionine biosynthesis pathway. Can also use O-succinyl-homoserine (OSH), although at low efficiency. The chain is O-acetyl-L-homoserine sulfhydrylase from Leptospira meyeri.